Here is a 137-residue protein sequence, read N- to C-terminus: AVCVSLLGAANIPPQHLNLYQFKEMIRYTIPCEKTWGEYADYGCYCGAGGSGRPIDALDRCCYVHDNCYGDAEKKHKCNPKTQSYSYKLTKRTIICYGAAGTCGRIVCDCDRTTALCFGNSEYIEGHKNIDTARFCQ.

The first 9 residues, 1-9 (AVCVSLLGA), serve as a signal peptide directing secretion. Positions 10–17 (ANIPPQHL) are excised as a propeptide. 6 disulfide bridges follow: C44-C136, C46-C62, C61-C117, C68-C110, C78-C103, and C96-C108. Ca(2+) contacts are provided by Y45, G47, and G49. H65 is a catalytic residue. D66 provides a ligand contact to Ca(2+). D111 is an active-site residue.

The protein belongs to the phospholipase A2 family. Group I subfamily. D49 sub-subfamily. As to quaternary structure, heterodimer; disulfide-linked. The A chains have phospholipase A2 activity and the B chains show homology with the basic protease inhibitors. Ca(2+) is required as a cofactor. Expressed by the venom gland.

The protein resides in the secreted. The catalysed reaction is a 1,2-diacyl-sn-glycero-3-phosphocholine + H2O = a 1-acyl-sn-glycero-3-phosphocholine + a fatty acid + H(+). In terms of biological role, snake venom phospholipase A2 (PLA2) that inhibits neuromuscular transmission by blocking acetylcholine release from the nerve termini. PLA2 catalyzes the calcium-dependent hydrolysis of the 2-acyl groups in 3-sn-phosphoglycerides. This chain is Basic phospholipase A2 beta-bungarotoxin A5 chain, found in Bungarus multicinctus (Many-banded krait).